The chain runs to 564 residues: Probable cysteine--tRNA ligase, mitochondrial (564 aa).

Cys-78 lines the Zn(2+) pocket. Gly-79 provides a ligand contact to L-cysteine. Positions 80 to 90 (PTVYDHAHLGH) match the 'HIGH' region motif. L-cysteine is bound at residue Thr-119. The 'KIIK' region motif lies at 124 to 127 (KIIK). Cys-257, His-282, and Glu-286 together coordinate Zn(2+). His-282 lines the L-cysteine pocket. Residues 317–321 (KMSKS) carry the 'KMSKS' region motif. Lys-320 contacts ATP.

The protein belongs to the class-I aminoacyl-tRNA synthetase family. It depends on Zn(2+) as a cofactor.

The protein localises to the mitochondrion. The enzyme catalyses tRNA(Cys) + L-cysteine + ATP = L-cysteinyl-tRNA(Cys) + AMP + diphosphate. It catalyses the reaction 2 L-cysteine = S-sulfanyl-L-cysteine + L-alanine. It carries out the reaction S-sulfanyl-L-cysteine + L-cysteine = S-disulfanyl-L-cysteine + L-alanine. The catalysed reaction is S-sulfanyl-L-cysteine + tRNA(Cys) + ATP = (S)-sulfanyl-L-cysteinyl-tRNA(Cys) + AMP + diphosphate. The enzyme catalyses S-disulfanyl-L-cysteine + tRNA(Cys) + ATP = (S)-disulfanyl-L-cysteinyl-tRNA(Cys) + AMP + diphosphate. Mitochondrial cysteine-specific aminoacyl-tRNA synthetase that catalyzes the ATP-dependent ligation of cysteine to tRNA(Cys). Functionally, in addition to its role as an aminoacyl-tRNA synthetase, has also cysteine persulfide synthase activity. Produces reactive persulfide species such as cysteine persulfide (CysSSH) from substrate cysteine and mediate direct incorporation of CysSSH into proteins during translations, resulting in protein persulfides and polysulfides. CysSSHs behave as potent antioxidants and cellular protectants. The protein is Probable cysteine--tRNA ligase, mitochondrial of Homo sapiens (Human).